A 401-amino-acid polypeptide reads, in one-letter code: Probable cysteine desulfurase (401 aa).

The residue at position 223 (lysine 223) is an N6-(pyridoxal phosphate)lysine.

It belongs to the class-V pyridoxal-phosphate-dependent aminotransferase family. Csd subfamily. The cofactor is pyridoxal 5'-phosphate.

The enzyme catalyses (sulfur carrier)-H + L-cysteine = (sulfur carrier)-SH + L-alanine. Catalyzes the removal of elemental sulfur and selenium atoms from L-cysteine, L-cystine, L-selenocysteine, and L-selenocystine to produce L-alanine. This is Probable cysteine desulfurase (csdA) from Pseudomonas putida (strain ATCC 47054 / DSM 6125 / CFBP 8728 / NCIMB 11950 / KT2440).